The sequence spans 383 residues: Carbamoyl phosphate synthase small chain (383 aa).

A CPSase region spans residues 1–190 (MPHPSSRQAH…FDQRLKQHPD (190 aa)). Residues S51, G242, and G244 each contribute to the L-glutamine site. In terms of domain architecture, Glutamine amidotransferase type-1 spans 194–381 (RVVAIDFGIK…VALMADRRDV (188 aa)). Catalysis depends on C271, which acts as the Nucleophile. The L-glutamine site is built by L272, Q275, N311, G313, and F314. Active-site residues include H354 and E356.

It belongs to the CarA family. In terms of assembly, composed of two chains; the small (or glutamine) chain promotes the hydrolysis of glutamine to ammonia, which is used by the large (or ammonia) chain to synthesize carbamoyl phosphate. Tetramer of heterodimers (alpha,beta)4.

The enzyme catalyses hydrogencarbonate + L-glutamine + 2 ATP + H2O = carbamoyl phosphate + L-glutamate + 2 ADP + phosphate + 2 H(+). It carries out the reaction L-glutamine + H2O = L-glutamate + NH4(+). Its pathway is amino-acid biosynthesis; L-arginine biosynthesis; carbamoyl phosphate from bicarbonate: step 1/1. The protein operates within pyrimidine metabolism; UMP biosynthesis via de novo pathway; (S)-dihydroorotate from bicarbonate: step 1/3. In terms of biological role, small subunit of the glutamine-dependent carbamoyl phosphate synthetase (CPSase). CPSase catalyzes the formation of carbamoyl phosphate from the ammonia moiety of glutamine, carbonate, and phosphate donated by ATP, constituting the first step of 2 biosynthetic pathways, one leading to arginine and/or urea and the other to pyrimidine nucleotides. The small subunit (glutamine amidotransferase) binds and cleaves glutamine to supply the large subunit with the substrate ammonia. The protein is Carbamoyl phosphate synthase small chain of Parasynechococcus marenigrum (strain WH8102).